The following is a 645-amino-acid chain: Putative palmitoyltransferase ZDHHC13 (645 aa).

Positions 1–73 (MDWSEGDGSH…KSSHPEDSSS (73 aa)) are disordered. At 1–314 (MDWSEGDGSH…ACLKLLNRYK (314 aa)) the chain is on the cytoplasmic side. Over residues 7-20 (DGSHSHGHMGDSCH) the composition is skewed to basic and acidic residues. Over residues 23–33 (GGGHSHGHGHS) the composition is skewed to basic residues. Gly residues predominate over residues 34–43 (HGGSGFGGFM). 5 ANK repeats span residues 104-133 (ENVT…VIDQ), 138-167 (LNST…DPSL), 171-200 (EGYR…EVDL), 204-234 (NGQT…SVNA), and 239-268 (NRNS…SVDM). The chain crosses the membrane as a helical span at residues 315–335 (VCLQSVFSVVVVGAFGAILDM). A topological domain (lumenal) is located at residue R336. Residues 337–357 (TESWLLKGILLACIMAVINLA) form a helical membrane-spanning segment. Topologically, residues 358 to 369 (SRQLATVAVRSL) are cytoplasmic. A helical transmembrane segment spans residues 370–390 (IPSTGLIASVFWMVVTWVLWF). Residues 391–394 (LPDE) are Lumenal-facing. Residues 395 to 415 (PSAAVQMLFTVNITAVLYYYI) traverse the membrane as a helical segment. At 416 to 492 (RSCRTDPGHV…NGCIGARNHP (77 aa)) the chain is on the cytoplasmic side. Positions 449-499 (IFCTSCMMRKPMRANHCFSCNACVAKQDHHSIWINGCIGARNHPFFVLFLV) constitute a DHHC domain. A helical membrane pass occupies residues 493-513 (FFVLFLVALNFLCIWMFYGSI). The Lumenal segment spans residues 514-542 (TYWSRHCPLHYSEEGIWGALTALMGCSPW). The chain crosses the membrane as a helical span at residues 543–563 (LLYVFCFVFFHTTWASILLVL). Topologically, residues 564–645 (QLYQIAFLGL…RDMFSSPDAV (82 aa)) are cytoplasmic.

Belongs to the DHHC palmitoyltransferase family. AKR/ZDHHC17 subfamily.

The protein localises to the golgi apparatus membrane. It is found in the cytoplasmic vesicle membrane. Its function is as follows. Putative palmitoyltransferase that could catalyze the addition of palmitate onto various protein substrates. The sequence is that of Putative palmitoyltransferase ZDHHC13 from Danio rerio (Zebrafish).